The primary structure comprises 257 residues: Imidazole glycerol phosphate synthase subunit HisF (257 aa).

Active-site residues include Asp-11 and Asp-130.

Belongs to the HisA/HisF family. As to quaternary structure, heterodimer of HisH and HisF.

It localises to the cytoplasm. It catalyses the reaction 5-[(5-phospho-1-deoxy-D-ribulos-1-ylimino)methylamino]-1-(5-phospho-beta-D-ribosyl)imidazole-4-carboxamide + L-glutamine = D-erythro-1-(imidazol-4-yl)glycerol 3-phosphate + 5-amino-1-(5-phospho-beta-D-ribosyl)imidazole-4-carboxamide + L-glutamate + H(+). Its pathway is amino-acid biosynthesis; L-histidine biosynthesis; L-histidine from 5-phospho-alpha-D-ribose 1-diphosphate: step 5/9. Functionally, IGPS catalyzes the conversion of PRFAR and glutamine to IGP, AICAR and glutamate. The HisF subunit catalyzes the cyclization activity that produces IGP and AICAR from PRFAR using the ammonia provided by the HisH subunit. This chain is Imidazole glycerol phosphate synthase subunit HisF, found in Shewanella sp. (strain MR-7).